The chain runs to 239 residues: Ribonuclease PH (239 aa).

Residues Arg-86 and Gly-124 to Arg-126 contribute to the phosphate site.

The protein belongs to the RNase PH family. In terms of assembly, homohexameric ring arranged as a trimer of dimers.

The catalysed reaction is tRNA(n+1) + phosphate = tRNA(n) + a ribonucleoside 5'-diphosphate. Functionally, phosphorolytic 3'-5' exoribonuclease that plays an important role in tRNA 3'-end maturation. Removes nucleotide residues following the 3'-CCA terminus of tRNAs; can also add nucleotides to the ends of RNA molecules by using nucleoside diphosphates as substrates, but this may not be physiologically important. Probably plays a role in initiation of 16S rRNA degradation (leading to ribosome degradation) during starvation. This is Ribonuclease PH from Cupriavidus necator (strain ATCC 17699 / DSM 428 / KCTC 22496 / NCIMB 10442 / H16 / Stanier 337) (Ralstonia eutropha).